The following is an 813-amino-acid chain: Origin of replication complex subunit 1B (813 aa).

The disordered stretch occupies residues 1–109 (MASTPRAKTF…TPKKKKKIDS (109 aa)). Polar residues predominate over residues 11 to 21 (KSPTKTPSNIY). The span at 27–41 (SPSSTSHTPQTPETH) shows a compositional bias: low complexity. Positions 43–52 (PLRRSARHVS) are enriched in basic residues. The Nuclear localization signal motif lies at 83 to 90 (PRKPTTDV). Residues 163-187 (DPEIEDCQICFKSDTNIMIECDDCL) are histone H3 binding. A PHD-type zinc finger spans residues 166–215 (IEDCQICFKSDTNIMIECDDCLGGFHLKCLKPPLKEVPEGDWICQFCEVK). Cys169, Cys172, Cys183, Cys186, His191, and Cys194 together coordinate Zn(2+). Residues 203–207 (PEGDW) are histone H3 binding. Residues Cys209 and Cys212 each contribute to the Zn(2+) site. Positions 226–344 (PKPPEGKKLA…VHWRSFKRLA (119 aa)) constitute a BAH domain. The segment at 319–324 (ASNDGD) is histone H3 binding. The tract at residues 349-372 (GDSDSDQEWNGRKEEEVDDSDEEM) is disordered. The segment at 436–803 (PKSLPCRSKE…DDVAFALKDN (368 aa)) is necessary and sufficient for ORC complex assembly. 471–479 (GVPGTGKTI) is a binding site for ATP. Asp561 and Glu562 together coordinate Mg(2+). The ATP site is built by Glu562, Asn595, and Arg660.

It belongs to the ORC1 family. In terms of assembly, component of the origin recognition complex (ORC) composed of at least ORC1 (ORC1A or ORC1B), ORC2, ORC3, ORC4, ORC5 and ORC6. ORC is regulated in a cell-cycle and development dependent manner. It is sequentially assembled at the exit from anaphase of mitosis and disassembled as cells enter S phase. Interacts directly with ORC2 and ORC5. Binds mostly unmodified histone H3, and, with lower efficiency, H3K4me1 H3K4me2 and H3K4me3. In terms of tissue distribution, follow a cell-cycle regulation with a peak at the G1/S-phase. Mostly expressed in flower buds, and, to a lower exent, in roots, leaves and stems.

Its subcellular location is the nucleus. Its function is as follows. Essential protein required for ovules fertilization. Component of the origin recognition complex (ORC) that binds origins of replication. It has a role in both chromosomal replication and mating type transcriptional silencing. Binds to the ARS consensus sequence (ACS) of origins of replication. H3K4me3 effector that positively regulates the transcription of a subset of genes. This is Origin of replication complex subunit 1B from Arabidopsis thaliana (Mouse-ear cress).